A 171-amino-acid chain; its full sequence is Homeobox protein engrailed-1-B (171 aa).

Disordered regions lie at residues 1–41 (EDPG…NAAP) and 60–86 (YSDR…KRPR). The span at 15 to 29 (PDSDTPSDSSKGSDS) shows a compositional bias: low complexity. Residues 82–141 (DKRPRTAFTAEQLQRLKAEFQANRYITEQRRQTLAQELSLNESQIKIWFQNKRAKIKKAS) constitute a DNA-binding region (homeobox).

Belongs to the engrailed homeobox family.

It localises to the nucleus. Its function is as follows. Required for proper formation of the apical ectodermal ridge and correct dorsal-ventral patterning in the limb. The chain is Homeobox protein engrailed-1-B (en1-b) from Xenopus laevis (African clawed frog).